A 907-amino-acid polypeptide reads, in one-letter code: Protein translocase subunit SecA (907 aa).

ATP is bound by residues glutamine 87, 105-109 (GEGKT), and aspartate 513. Positions 841-853 (EAQRRAQAEEAAR) are enriched in basic and acidic residues. Residues 841–907 (EAQRRAQAEE…KYKQCHGQIN (67 aa)) are disordered. Low complexity predominate over residues 854–865 (RAQAQHASAQSQ). Positions 872–887 (EGHHQPVVRDERKVGR) are enriched in basic and acidic residues. Positions 891, 893, 902, and 903 each coordinate Zn(2+).

The protein belongs to the SecA family. Monomer and homodimer. Part of the essential Sec protein translocation apparatus which comprises SecA, SecYEG and auxiliary proteins SecDF-YajC and YidC. Zn(2+) serves as cofactor.

The protein resides in the cell inner membrane. It is found in the cytoplasm. The enzyme catalyses ATP + H2O + cellular proteinSide 1 = ADP + phosphate + cellular proteinSide 2.. Part of the Sec protein translocase complex. Interacts with the SecYEG preprotein conducting channel. Has a central role in coupling the hydrolysis of ATP to the transfer of proteins into and across the cell membrane, serving both as a receptor for the preprotein-SecB complex and as an ATP-driven molecular motor driving the stepwise translocation of polypeptide chains across the membrane. This chain is Protein translocase subunit SecA, found in Vibrio vulnificus (strain YJ016).